We begin with the raw amino-acid sequence, 789 residues long: Disintegrin and metalloproteinase domain-containing protein 7 (789 aa).

The signal sequence occupies residues 1–23 (MLTTGIFWMTVLISHIQERGIVG). A propeptide spanning residues 24–176 (VEGQELVHPK…NHSCVGLNFT (153 aa)) is cleaved from the precursor. At 24–667 (VEGQELVHPK…EWGEALNLTS (644 aa)) the chain is on the extracellular side. Asn84, Asn167, and Asn174 each carry an N-linked (GlcNAc...) asparagine glycan. A Peptidase M12B domain is found at 199-393 (KFIELFVVAD…QKPACILNNP (195 aa)). Intrachain disulfides connect Cys310-Cys388, Cys350-Cys372, Cys352-Cys357, and Cys459-Cys479. In terms of domain architecture, Disintegrin spans 401 to 487 (YPFCGNKKVD…ECPKDEFQAN (87 aa)). N-linked (GlcNAc...) asparagine glycans are attached at residues Asn583, Asn628, and Asn664. The chain crosses the membrane as a helical span at residues 668–689 (VSIMVIVLVMVIIGVGLVILLI). The Cytoplasmic portion of the chain corresponds to 690 to 789 (RYQKCIKMKQ…DTQSGCERLG (100 aa)). The interval 764 to 789 (RGIADPKQTDNVNLNLDTQSGCERLG) is disordered. A compositionally biased stretch (polar residues) spans 772 to 789 (TDNVNLNLDTQSGCERLG).

In terms of assembly, interacts with ITM2B in sperm; the interaction increases following capacitation. Interacts with HSPA5 and CANX. As to expression, expressed in both the head and tails of sperm (at protein level). Expressed in the epididymis (at protein level). Abundantly expressed in the apical region of the proximal caput epididymal epithelium, with decreasing expression in the mid and distal caput epididymal epithelium.

It localises to the membrane. Functionally, required for normal male fertility via maintenance of epithelial cell morphology in the caput epididymis and subsequently correct epididymis lumen structure required for sperm development. Plays a role in sperm motility, flagella morphology and tyrosine phosphorylation during sperm capacitance. Plays a role in normal expression levels of HSPA5, ITM2B and ADAM2 in sperm both prior to and post-capacitation. This is a non catalytic metalloprotease-like protein. The chain is Disintegrin and metalloproteinase domain-containing protein 7 from Mus musculus (Mouse).